A 223-amino-acid polypeptide reads, in one-letter code: N-terminal Xaa-Pro-Lys N-methyltransferase 1 (223 aa).

Met-1 carries the N-acetylmethionine modification. N-acetylthreonine; in N-terminal Xaa-Pro-Lys N-methyltransferase 1, N-terminally processed is present on Thr-2. Residues Gly-69, Arg-74, 91 to 93 (DVT), 119 to 120 (LQ), and Gln-135 each bind S-adenosyl-L-methionine.

It belongs to the methyltransferase superfamily. NTM1 family.

The protein resides in the nucleus. It catalyses the reaction N-terminal L-alanyl-L-prolyl-L-lysyl-[protein] + 3 S-adenosyl-L-methionine = N-terminal N,N,N-trimethyl-L-alanyl-L-prolyl-L-lysyl-[protein] + 3 S-adenosyl-L-homocysteine + 3 H(+). It carries out the reaction N-terminal L-seryl-L-prolyl-L-lysyl-[protein] + 3 S-adenosyl-L-methionine = N-terminal N,N,N-trimethyl-L-seryl-L-prolyl-L-lysyl-[protein] + 3 S-adenosyl-L-homocysteine + 3 H(+). The catalysed reaction is N-terminal L-prolyl-L-prolyl-L-lysyl-[protein] + 2 S-adenosyl-L-methionine = N-terminal N,N-dimethyl-L-prolyl-L-prolyl-L-lysyl-[protein] + 2 S-adenosyl-L-homocysteine + 2 H(+). Distributive alpha-N-methyltransferase that methylates the N-terminus of target proteins containing the N-terminal motif [Ala/Gly/Pro/Ser]-Pro-Lys when the initiator Met is cleaved. Specifically catalyzes mono-, di- or tri-methylation of the exposed alpha-amino group of the Ala, Gly or Ser residue in the [Ala/Gly/Ser]-Pro-Lys motif and mono- or di-methylation of Pro in the Pro-Pro-Lys motif. Some of the substrates may be primed by NTMT2-mediated monomethylation. Catalyzes the trimethylation of the N-terminal Gly in CENPA (after removal of Met-1). Responsible for the N-terminal methylation of KLHL31, MYL2, MYL3, RB1, RCC1, RPL23A and SET. Required during mitosis for normal bipolar spindle formation and chromosome segregation via its action on RCC1. The protein is N-terminal Xaa-Pro-Lys N-methyltransferase 1 (Ntmt1) of Rattus norvegicus (Rat).